The following is a 375-amino-acid chain: Putative monooxygenase Rv1533 (375 aa).

Residues glutamine 190, glycine 195, glycine 224, and 243-246 each bind FMN; that span reads WCGS.

This sequence belongs to the nitronate monooxygenase family. FMN serves as cofactor.

The protein is Putative monooxygenase Rv1533 of Mycobacterium tuberculosis (strain ATCC 25618 / H37Rv).